The following is a 92-amino-acid chain: Putative protein pog (92 aa).

The protein is Putative protein pog of Acute bee paralysis virus (strain Rothamsted) (ABPV).